The sequence spans 123 residues: MALFKINKGEIMNFVNSTQLKTDIPNFDSGDTIIVHNRIVEGKKSRIQKFEGVVLRRRGSGSSETVIVRKESSGIGVEQSFNIHSPLVEKIEVIKYGKVRRAYISYMRNRSGKSARIKELNKQ.

This sequence belongs to the bacterial ribosomal protein bL19 family.

In terms of biological role, this protein is located at the 30S-50S ribosomal subunit interface and may play a role in the structure and function of the aminoacyl-tRNA binding site. The sequence is that of Large ribosomal subunit protein bL19 from Ureaplasma parvum serovar 3 (strain ATCC 27815 / 27 / NCTC 11736).